We begin with the raw amino-acid sequence, 122 residues long: Large ribosomal subunit protein uL14 (122 aa).

It belongs to the universal ribosomal protein uL14 family. Part of the 50S ribosomal subunit. Forms a cluster with proteins L3 and L19. In the 70S ribosome, L14 and L19 interact and together make contacts with the 16S rRNA in bridges B5 and B8.

Functionally, binds to 23S rRNA. Forms part of two intersubunit bridges in the 70S ribosome. This Parafrankia sp. (strain EAN1pec) protein is Large ribosomal subunit protein uL14.